A 94-amino-acid polypeptide reads, in one-letter code: MILFPSVDKLLERVDSRYSLIMLASKRAHEIDKYRIDKWRAAHPDKAGETVSLEGDKPLLLDHYDSNKSVGMALEEIEAGLVTIDPDQHEDLQD.

It belongs to the RNA polymerase subunit omega family. In terms of assembly, the RNAP catalytic core consists of 2 alpha, 1 beta, 1 beta' and 1 omega subunit. When a sigma factor is associated with the core the holoenzyme is formed, which can initiate transcription.

The enzyme catalyses RNA(n) + a ribonucleoside 5'-triphosphate = RNA(n+1) + diphosphate. Functionally, promotes RNA polymerase assembly. Latches the N- and C-terminal regions of the beta' subunit thereby facilitating its interaction with the beta and alpha subunits. The sequence is that of DNA-directed RNA polymerase subunit omega from Limosilactobacillus fermentum (strain NBRC 3956 / LMG 18251) (Lactobacillus fermentum).